A 221-amino-acid polypeptide reads, in one-letter code: Early nodulin-like protein 4 (221 aa).

Positions 1–21 (MVFVKMTDVYLMIVMLMGLGF) are cleaved as a signal peptide. In terms of domain architecture, Phytocyanin spans 29–130 (HKFYVGGRDG…GQKLAVTVMS (102 aa)). N-linked (GlcNAc...) asparagine glycosylation is found at asparagine 59 and asparagine 85. An intrachain disulfide couples cysteine 84 to cysteine 118. Residues 130-185 (STGHHSHTPRHPSPSPSPSASPVRKALLSPAPIPVHKALSSPAPTPGVDPSHSEVL) form a disordered region. A lipid anchor (GPI-anchor amidated asparagine) is attached at asparagine 197. Residues 198–221 (LAGSVAPGVISLGLVLVIMISSMV) constitute a propeptide, removed in mature form.

Belongs to the early nodulin-like (ENODL) family. In terms of tissue distribution, confined to flowers.

The protein localises to the cell membrane. In terms of biological role, may act as a carbohydrate transporter. The sequence is that of Early nodulin-like protein 4 from Arabidopsis thaliana (Mouse-ear cress).